The chain runs to 624 residues: DNA (cytosine-5)-methyltransferase DRM1 (624 aa).

2 consecutive UBA domains span residues 57-100 (RISD…LFNY) and 108-149 (SSKS…LLTY). A disordered region spans residues 160–189 (DMNININDDDDDNLYSLSSDDEEDELNNSS). Residues 166 to 185 (NDDDDDNLYSLSSDDEEDEL) are compositionally biased toward acidic residues. Positions 188–231 (SSNEDRILQALIKMGYLREDAAIAIERCGEDASMEEVVDFICAA) constitute a UBA 3 domain. Residues 291–622 (MHRPVPIPDI…EAVRRKARHM (332 aa)) enclose the SAM-dependent MTase DRM-type domain.

This sequence belongs to the class I-like SAM-binding methyltransferase superfamily. DRM-methyltransferase family.

It localises to the nucleus. The enzyme catalyses a 2'-deoxycytidine in DNA + S-adenosyl-L-methionine = a 5-methyl-2'-deoxycytidine in DNA + S-adenosyl-L-homocysteine + H(+). Its function is as follows. Involved in de novo DNA methylation. Controls asymmetric and CpNpG methylation. Required for FWA gene silencing but not for the maintenance of SUP gene silencing. Functionally redundant to CMT3 to maintain non-CpG methylation. Involved in RNA-directed DNA methylation. In Arabidopsis thaliana (Mouse-ear cress), this protein is DNA (cytosine-5)-methyltransferase DRM1 (DRM1).